A 4076-amino-acid chain; its full sequence is E3 ubiquitin-protein ligase TOM1-like (4076 aa).

Over residues 225–237 the composition is skewed to low complexity; sequence SSAAPAVSAGSTA. 17 disordered regions span residues 225-256, 288-360, 748-819, 921-970, 1083-1103, 1571-1646, 1988-2041, 2067-2110, 2275-2295, 2356-2551, 2581-2634, 2782-2817, 2858-2955, 3037-3066, 3105-3132, 3216-3241, and 3353-3444; these read SSAAPAVSAGSTAKAKDKEKEKEKATGPKNVA, YPDT…RDGP, IPAE…ILPS, LEAP…NKPA, SPVQDEEPASEKRTPDVSSGT, MALD…ITRE, PADA…KRPI, NVPA…KLAK, EGDKDSRPNNPRGTDPSIGRS, SGTA…ELDY, GDDL…LLAP, IPIPPPHSRESRPTEARRDTYQEPHQAVQFSPESTH, EKAR…QAED, EQHEQRRRERQNAAGGQDLGPADMDPASIL, RQLHAQQGGQAASRSRDAQRPTEAGAGT, KQLKEKDAKTPHPLKRSLTGGTNNNG, and EEQA…QLTP. The span at 238–250 shows a compositional bias: basic and acidic residues; it reads KAKDKEKEKEKAT. The segment covering 311-320 has biased composition (low complexity); it reads TTSSPAAPTP. Over residues 322-343 the composition is skewed to polar residues; sequence RRSSTMNVSQSSRTQRVGSSEE. The span at 767–778 shows a compositional bias: acidic residues; it reads EGNDADDDSEDD. Residues 940–950 show a composition bias toward basic and acidic residues; it reads VKGKGKEKATD. Over residues 959 to 969 the composition is skewed to polar residues; the sequence is ASSSSSGNNKP. A compositionally biased stretch (polar residues) spans 1606–1620; sequence PGTSRETNVGASTTA. A compositionally biased stretch (low complexity) spans 1621–1632; the sequence is PQQLPVLPSQQP. Over residues 1633-1642 the composition is skewed to polar residues; sequence ATESQSNTPR. Basic and acidic residues predominate over residues 2021–2041; that stretch reads VTDKDMHDAPKNPAQDLKRPI. Over residues 2086-2096 the composition is skewed to polar residues; it reads NEATPSPSGDE. Residues 2099-2110 are compositionally biased toward basic and acidic residues; sequence SESKEKEKKLAK. Acidic residues-rich tracts occupy residues 2378–2387 and 2405–2450; these read DLTDDREETP and EFSD…DLGE. Residues 2460 to 2469 are compositionally biased toward low complexity; the sequence is QPGVVEVLMG. Composition is skewed to acidic residues over residues 2470–2516 and 2523–2551; these read ENDD…DLED and EEGNAIDDDGASWDDGTDEDEEDEEELDY. The span at 2587-2597 shows a compositional bias: basic and acidic residues; that stretch reads EPIRDFDGHYI. Acidic residues predominate over residues 2598–2622; that stretch reads DDDEDGEEDDDEDEGEDDMDDDMYF. Basic and acidic residues-rich tracts occupy residues 2788-2803 and 2858-2912; these read HSRESRPTEARRDTYQ and EKAR…ERAE. The stretch at 2851 to 2929 forms a coiled coil; that stretch reads AIQAEKEEKA…QAAADQEANA (79 aa). Low complexity predominate over residues 2913–2927; the sequence is AAAQAAAQAAADQEA. The segment covering 3037–3047 has biased composition (basic and acidic residues); it reads EQHEQRRRERQ. A compositionally biased stretch (polar residues) spans 3108–3117; it reads HAQQGGQAAS. Residues 3341–3375 are a coiled coil; that stretch reads PLQAIERRRKEAEEQAKKKKEAEEKAATEREAANA. Residues 3353–3372 show a composition bias toward basic and acidic residues; it reads EEQAKKKKEAEEKAATEREA. A compositionally biased stretch (low complexity) spans 3373 to 3414; the sequence is ANAPEEQASTSTEQTPAQQEATQQPSESTPAAASGQQPAQQD. A compositionally biased stretch (basic and acidic residues) spans 3415–3439; the sequence is QENKELEAPKEKADEKDVQSDEKKI. The HECT domain occupies 3740 to 4076; sequence KADELKFGKL…TAGSDYFGFA (337 aa). Cys4043 serves as the catalytic Glycyl thioester intermediate.

It belongs to the UPL family. TOM1/PTR1 subfamily.

It localises to the nucleus. It carries out the reaction S-ubiquitinyl-[E2 ubiquitin-conjugating enzyme]-L-cysteine + [acceptor protein]-L-lysine = [E2 ubiquitin-conjugating enzyme]-L-cysteine + N(6)-ubiquitinyl-[acceptor protein]-L-lysine.. The protein operates within protein modification; protein ubiquitination. Its function is as follows. Probable ubiquitin ligase protein, which may be involved in mRNA export. E3 ubiquitin ligase proteins mediate ubiquitination and subsequent proteasomal degradation of target proteins. Participates in mRNA export from the nucleus by regulating the transport of hnRNP proteins. The polypeptide is E3 ubiquitin-protein ligase TOM1-like (Neurospora crassa (strain ATCC 24698 / 74-OR23-1A / CBS 708.71 / DSM 1257 / FGSC 987)).